A 357-amino-acid polypeptide reads, in one-letter code: THUMP domain-containing protein 1 (357 aa).

Residues 1 to 10 are compositionally biased toward polar residues; that stretch reads MAARIQQSPQ. 2 disordered regions span residues 1 to 38 and 74 to 95; these read MAARIQQSPQPGGGKRKGKAQYVQAKRARRWDGGGPRQ and GPEKFADKDQQPSGSEGEDDDV. Ala2 is subject to N-acetylalanine. Residues Ser8, Ser86, Ser88, and Ser119 each carry the phosphoserine modification. Residues 147–254 form the THUMP domain; the sequence is DIYKTKKKKT…KAVCCLSVVK (108 aa). Ser270 carries the phosphoserine modification. 2 stretches are compositionally biased toward polar residues: residues 276-287 and 298-315; these read QLNPKQAAQTGN and KSSQNDPAEGKNNQQVVP. Residues 276–357 are disordered; that stretch reads QLNPKQAAQT…EGSESNENDL (82 aa).

It belongs to the THUMPD1 family. In terms of assembly, interacts with NAT10. Binds tRNA.

In terms of biological role, functions as a tRNA-binding adapter to mediate NAT10-dependent tRNA acetylation modifying cytidine to N4-acetylcytidine (ac4C). The protein is THUMP domain-containing protein 1 (THUMPD1) of Bos taurus (Bovine).